Here is a 944-residue protein sequence, read N- to C-terminus: Neutral alpha-glucosidase AB (944 aa).

An N-terminal signal peptide occupies residues 1-32 (MAAVAAVAARRRRSWTGLVLACLGVCLGLTLA). Residues C41 and C47 are joined by a disulfide bond. A Phosphoserine modification is found at S52. The N-linked (GlcNAc...) asparagine glycan is linked to N97. A disordered region spans residues 181–225 (QRAPRVSQGSKDPAEGDGAQPEEAPGDGDKPEEIQGKAEKDEPGA). The segment covering 207–225 (DGDKPEEIQGKAEKDEPGA) has biased composition (basic and acidic residues). Residues D283 and D429 each contribute to the substrate site. The active-site Nucleophile is D542. R602 lines the substrate pocket. D618 functions as the Proton donor in the catalytic mechanism. A disulfide bridge connects residues C633 and C644. Substrate is bound at residue H676.

This sequence belongs to the glycosyl hydrolase 31 family. In terms of assembly, heterodimer of a catalytic alpha subunit (GANAB) and a beta subunit (PRKCSH). Binds glycosylated PTPRC. In terms of processing, contains sialylated polysaccharide chains.

The protein localises to the endoplasmic reticulum. It localises to the golgi apparatus. It is found in the melanosome. The catalysed reaction is N(4)-(alpha-D-Glc-(1-&gt;3)-alpha-D-Man-(1-&gt;2)-alpha-D-Man-(1-&gt;2)-alpha-D-Man-(1-&gt;3)-[alpha-D-Man-(1-&gt;2)-alpha-D-Man-(1-&gt;3)-[alpha-D-Man-(1-&gt;2)-alpha-D-Man-(1-&gt;6)]-alpha-D-Man-(1-&gt;6)]-beta-D-Man-(1-&gt;4)-beta-D-GlcNAc-(1-&gt;4)-beta-D-GlcNAc)-L-asparaginyl-[protein] + H2O = N(4)-(alpha-D-Man-(1-&gt;2)-alpha-D-Man-(1-&gt;2)-alpha-D-Man-(1-&gt;3)-[alpha-D-Man-(1-&gt;2)-alpha-D-Man-(1-&gt;3)-[alpha-D-Man-(1-&gt;2)-alpha-D-Man-(1-&gt;6)]-alpha-D-Man-(1-&gt;6)]-beta-D-Man-(1-&gt;4)-beta-D-GlcNAc-(1-&gt;4)-beta-D-GlcNAc)-L-asparaginyl-[protein] (N-glucan mannose isomer 9A1,2,3B1,2,3) + beta-D-glucose. It carries out the reaction N(4)-(alpha-D-Glc-(1-&gt;3)-alpha-D-Glc-(1-&gt;3)-alpha-D-Man-(1-&gt;2)-alpha-D-Man-(1-&gt;2)-alpha-D-Man-(1-&gt;3)-[alpha-D-Man-(1-&gt;2)-alpha-D-Man-(1-&gt;3)-[alpha-D-Man-(1-&gt;2)-alpha-D-Man-(1-&gt;6)]-alpha-D-Man-(1-&gt;6)]-beta-D-Man-(1-&gt;4)-beta-D-GlcNAc-(1-&gt;4)-beta-D-GlcNAc)-L-asparaginyl-[protein] + H2O = N(4)-(alpha-D-Glc-(1-&gt;3)-alpha-D-Man-(1-&gt;2)-alpha-D-Man-(1-&gt;2)-alpha-D-Man-(1-&gt;3)-[alpha-D-Man-(1-&gt;2)-alpha-D-Man-(1-&gt;3)-[alpha-D-Man-(1-&gt;2)-alpha-D-Man-(1-&gt;6)]-alpha-D-Man-(1-&gt;6)]-beta-D-Man-(1-&gt;4)-beta-D-GlcNAc-(1-&gt;4)-beta-D-GlcNAc)-L-asparaginyl-[protein] + beta-D-glucose. It participates in glycan metabolism; N-glycan metabolism. Catalytic subunit of glucosidase II that cleaves sequentially the 2 innermost alpha-1,3-linked glucose residues from the Glc(2)Man(9)GlcNAc(2) oligosaccharide precursor of immature glycoproteins. Required for PKD1/Polycystin-1 and PKD2/Polycystin-2 maturation and localization to the cell surface and cilia. The protein is Neutral alpha-glucosidase AB (GANAB) of Sus scrofa (Pig).